Reading from the N-terminus, the 138-residue chain is Large ribosomal subunit protein eL27 (138 aa).

Belongs to the eukaryotic ribosomal protein eL27 family.

This Solanum tuberosum (Potato) protein is Large ribosomal subunit protein eL27 (RPL27).